We begin with the raw amino-acid sequence, 190 residues long: PBP1-interacting protein LSM12 (190 aa).

The Sm domain occupies P2–N69. An AD domain is found at P84 to K190.

It belongs to the LSM12 family. As to quaternary structure, forms a complex composed of at least MKT1, PBP1, XAC1 and LSM12. Forms a complex composed of at least MKT1L, PBP1, XAC1 and LSM12. Within the complex, interacts with PBP1; the interaction is direct.

Its function is as follows. Involved in post-transcriptional regulation of gene expression. In Trypanosoma brucei brucei (strain 927/4 GUTat10.1), this protein is PBP1-interacting protein LSM12.